The sequence spans 114 residues: Large ribosomal subunit protein uL18 (114 aa).

The protein belongs to the universal ribosomal protein uL18 family. As to quaternary structure, part of the 50S ribosomal subunit; part of the 5S rRNA/L5/L18/L25 subcomplex. Contacts the 5S and 23S rRNAs.

Its function is as follows. This is one of the proteins that bind and probably mediate the attachment of the 5S RNA into the large ribosomal subunit, where it forms part of the central protuberance. The chain is Large ribosomal subunit protein uL18 from Bacteroides fragilis (strain ATCC 25285 / DSM 2151 / CCUG 4856 / JCM 11019 / LMG 10263 / NCTC 9343 / Onslow / VPI 2553 / EN-2).